We begin with the raw amino-acid sequence, 433 residues long: Serine/threonine-protein kinase KDX1 (433 aa).

The 296-residue stretch at 23–318 (FHLTGKIGRG…VEDALEHPYL (296 aa)) folds into the Protein kinase domain. Residues 29-37 (IGRGSHSLI) and lysine 55 each bind ATP. The active-site Proton acceptor is aspartate 153.

Belongs to the protein kinase superfamily. Ser/Thr protein kinase family. Interacts with RLM1.

It catalyses the reaction L-seryl-[protein] + ATP = O-phospho-L-seryl-[protein] + ADP + H(+). The enzyme catalyses L-threonyl-[protein] + ATP = O-phospho-L-threonyl-[protein] + ADP + H(+). Serine/threonine-protein kinase involved in the SLT2 mitogen-activated (MAP) kinase signaling pathway that regulates cell wall integrity. May also be involved in the mating pheromone and the CWI MAPK pathways. This Saccharomyces cerevisiae (strain ATCC 204508 / S288c) (Baker's yeast) protein is Serine/threonine-protein kinase KDX1 (KDX1).